A 238-amino-acid chain; its full sequence is Opacity protein opA68 (238 aa).

A1 is a signal peptide. A disordered region spans residues 88–109 (NLQRRTSNGNRRDRKTENQENG).

This sequence belongs to the opacity porin family.

The protein localises to the cell outer membrane. Implicated in a number of adherence functions. OPA proteins are implicated in pathogenesis and are subject to phase variation. The polypeptide is Opacity protein opA68 (Neisseria gonorrhoeae).